A 306-amino-acid chain; its full sequence is Pantothenate kinase (306 aa).

91 to 98 (GSVAVGKS) serves as a coordination point for ATP.

It belongs to the prokaryotic pantothenate kinase family.

It localises to the cytoplasm. It catalyses the reaction (R)-pantothenate + ATP = (R)-4'-phosphopantothenate + ADP + H(+). Its pathway is cofactor biosynthesis; coenzyme A biosynthesis; CoA from (R)-pantothenate: step 1/5. The polypeptide is Pantothenate kinase (Streptococcus pneumoniae (strain Hungary19A-6)).